Reading from the N-terminus, the 75-residue chain is Transcription attenuation protein MtrB (75 aa).

Belongs to the MtrB family. Oligomer of 11 identical subunits arranged in doughnut-like structure.

In terms of biological role, required for transcription attenuation control in the trp operon. This trans-acting factor binds to trinucleotide repeats (GAG or UAG) located in the trp leader transcript causing transcription termination. Binds the leader RNA only in presence of L-tryptophan. The protein is Transcription attenuation protein MtrB (mtrB) of Bacillus subtilis (strain 168).